Reading from the N-terminus, the 167-residue chain is Large ribosomal subunit protein uL10 (167 aa).

This sequence belongs to the universal ribosomal protein uL10 family. As to quaternary structure, part of the ribosomal stalk of the 50S ribosomal subunit. The N-terminus interacts with L11 and the large rRNA to form the base of the stalk. The C-terminus forms an elongated spine to which L12 dimers bind in a sequential fashion forming a multimeric L10(L12)X complex.

In terms of biological role, forms part of the ribosomal stalk, playing a central role in the interaction of the ribosome with GTP-bound translation factors. The polypeptide is Large ribosomal subunit protein uL10 (Lactiplantibacillus plantarum (strain ATCC BAA-793 / NCIMB 8826 / WCFS1) (Lactobacillus plantarum)).